The chain runs to 460 residues: 1-aminocyclopropane-1-carboxylate synthase 11 (460 aa).

2 residues coordinate substrate: glutamate 45 and tyrosine 83. Residue lysine 267 is modified to N6-(pyridoxal phosphate)lysine.

This sequence belongs to the class-I pyridoxal-phosphate-dependent aminotransferase family. As to quaternary structure, homodimer and heterodimer. In vivo, the relevance of heterodimerization with other ACS enzymes is however unsure. Interacts with GRF3. The cofactor is pyridoxal 5'-phosphate. In terms of processing, may be processed at its C-terminus. In terms of tissue distribution, expressed in roots.

The catalysed reaction is S-adenosyl-L-methionine = 1-aminocyclopropane-1-carboxylate + S-methyl-5'-thioadenosine + H(+). Its pathway is alkene biosynthesis; ethylene biosynthesis via S-adenosyl-L-methionine; ethylene from S-adenosyl-L-methionine: step 1/2. Functionally, 1-aminocyclopropane-1-carboxylate synthase (ACS) enzymes catalyze the conversion of S-adenosyl-L-methionine (SAM) into 1-aminocyclopropane-1-carboxylate (ACC), a direct precursor of ethylene. This Arabidopsis thaliana (Mouse-ear cress) protein is 1-aminocyclopropane-1-carboxylate synthase 11 (ACS11).